Reading from the N-terminus, the 47-residue chain is Large ribosomal subunit protein bL34 (47 aa).

It belongs to the bacterial ribosomal protein bL34 family.

The protein is Large ribosomal subunit protein bL34 of Mycobacterium tuberculosis (strain ATCC 25177 / H37Ra).